A 38-amino-acid chain; its full sequence is Photosystem II reaction center protein L (38 aa).

The helical transmembrane segment at 17–37 (SLYWGLLLIFVLAVLFSNYFF) threads the bilayer.

It belongs to the PsbL family. PSII is composed of 1 copy each of membrane proteins PsbA, PsbB, PsbC, PsbD, PsbE, PsbF, PsbH, PsbI, PsbJ, PsbK, PsbL, PsbM, PsbT, PsbX, PsbY, PsbZ, Psb30/Ycf12, at least 3 peripheral proteins of the oxygen-evolving complex and a large number of cofactors. It forms dimeric complexes.

It localises to the plastid. The protein localises to the chloroplast thylakoid membrane. One of the components of the core complex of photosystem II (PSII). PSII is a light-driven water:plastoquinone oxidoreductase that uses light energy to abstract electrons from H(2)O, generating O(2) and a proton gradient subsequently used for ATP formation. It consists of a core antenna complex that captures photons, and an electron transfer chain that converts photonic excitation into a charge separation. This subunit is found at the monomer-monomer interface and is required for correct PSII assembly and/or dimerization. The protein is Photosystem II reaction center protein L of Ananas comosus (Pineapple).